The primary structure comprises 570 residues: Probable metalloreductase AIM14 (570 aa).

The next 7 membrane-spanning stretches (helical) occupy residues 21–41 (IKYGYYVLIISLVYLIGLALL), 70–90 (AIHLGILFFAVLIPFYYHYSL), 101–118 (LGRLSYALIPLNLFLTLR), 142–162 (IITVIGLLHGIFFIIKWAIDD), 177–197 (FVGFIISILVLFLLICSIGPM), 204–224 (LFYIVHNLVNVAFILLTPIHS), and 230–250 (FPFLLLNCTLLFIHIINRIVF). One can recognise a Ferric oxidoreductase domain in the interval 101–219 (LGRLSYALIP…NLVNVAFILL (119 aa)). The FAD-binding FR-type domain occupies 250–388 (FAKSLMILNK…GGSGISFALP (139 aa)). A compositionally biased stretch (polar residues) spans 481–505 (SNFNSENADSNDNTPETSHSPTKEN). Residues 481–507 (SNFNSENADSNDNTPETSHSPTKENGS) are disordered.

The protein belongs to the ferric reductase (FRE) family. AIM14 subfamily. As to quaternary structure, interacts with ribosomes.

The protein localises to the membrane. Probable cell surface metalloreductase. May be involved in iron or copper homeostasis. In Saccharomyces cerevisiae (strain YJM789) (Baker's yeast), this protein is Probable metalloreductase AIM14 (AIM14).